The chain runs to 104 residues: UPF0213 protein VIBHAR_05350 (104 aa).

Positions 7–82 constitute a GIY-YIG domain; sequence QRWSVYLIRN…KQLTKTKKEL (76 aa).

It belongs to the UPF0213 family.

The polypeptide is UPF0213 protein VIBHAR_05350 (Vibrio campbellii (strain ATCC BAA-1116)).